A 607-amino-acid chain; its full sequence is Pogo transposable element with KRAB domain (607 aa).

A coiled-coil region spans residues 8–29; it reads LNLTLKEEQKEEEVEIQELEDG. K13 is covalently cross-linked (Glycyl lysine isopeptide (Lys-Gly) (interchain with G-Cter in SUMO2)). In terms of domain architecture, KRAB spans 47-118; that stretch reads ALFDEVAIYF…DEWRLQGVTF (72 aa). One can recognise an HTH CENPB-type domain in the interval 250–323; that stretch reads AFRGPKNGRF…MRRYDLSLRH (74 aa). The DDE-1 domain maps to 355 to 567; the sequence is YEVAQMGNAD…ISSESIVQGF (213 aa). K384 participates in a covalent cross-link: Glycyl lysine isopeptide (Lys-Gly) (interchain with G-Cter in SUMO2). Residues 588–607 form a disordered region; it reads GELPKEPPKECGPESVAEGD. Positions 589-599 are enriched in basic and acidic residues; the sequence is ELPKEPPKECG.

The protein localises to the nucleus. This chain is Pogo transposable element with KRAB domain (Pogk), found in Mus musculus (Mouse).